The sequence spans 233 residues: Ras-related protein Rab-20 (233 aa).

G17, K18, T19, D32, and T36 together coordinate GTP. Residue T19 coordinates Mg(2+). Short sequence motifs (switch) lie at residues 28 to 41 and 55 to 72; these read RRFPDTVSTVGGAF and DTAGREQFHGLGSLYCRG. Residues T36 and D55 each contribute to the Mg(2+) site. GTP is bound by residues G58, N113, K114, and D116. Over residues 119–130 the composition is skewed to basic and acidic residues; it reads SERDTEGGEKEG. The disordered stretch occupies residues 119-138; sequence SERDTEGGEKEGPASGKVGS. GTP is bound by residues A183 and K184. Residues C231 and C232 are each lipidated (S-geranylgeranyl cysteine).

This sequence belongs to the small GTPase superfamily. Rab family. The cofactor is Mg(2+). As to expression, present in a variety of tissues, but not in brain.

It localises to the cytoplasmic vesicle. The protein resides in the phagosome. The protein localises to the phagosome membrane. Its subcellular location is the golgi apparatus. The catalysed reaction is GTP + H2O = GDP + phosphate + H(+). With respect to regulation, regulated by guanine nucleotide exchange factors (GEFs) which promote the exchange of bound GDP for free GTP. Regulated by GTPase activating proteins (GAPs) which increase the GTP hydrolysis activity. Inhibited by GDP dissociation inhibitors (GDIs). Plays a role in apical endocytosis/recycling. Plays a role in the maturation and acidification of phagosomes that engulf pathogens, such as S.aureus and Mycobacterium. Plays a role in the fusion of phagosomes with lysosomes. The sequence is that of Ras-related protein Rab-20 from Mus musculus (Mouse).